The chain runs to 211 residues: Large ribosomal subunit protein uL3 (211 aa).

Residues 122–157 (NQKRNNFGRGPMSHGSKNHRAPGSIGAGTTPGRVYP) form a disordered region.

The protein belongs to the universal ribosomal protein uL3 family. Part of the 50S ribosomal subunit. Forms a cluster with proteins L14 and L19.

Its function is as follows. One of the primary rRNA binding proteins, it binds directly near the 3'-end of the 23S rRNA, where it nucleates assembly of the 50S subunit. The chain is Large ribosomal subunit protein uL3 from Trichormus variabilis (strain ATCC 29413 / PCC 7937) (Anabaena variabilis).